A 198-amino-acid chain; its full sequence is Superoxide dismutase [Fe] (198 aa).

Residues H27, H74, D157, and H161 each coordinate Fe(3+).

This sequence belongs to the iron/manganese superoxide dismutase family. As to quaternary structure, homodimer. The cofactor is Fe(3+).

It carries out the reaction 2 superoxide + 2 H(+) = H2O2 + O2. In terms of biological role, destroys superoxide anion radicals which are normally produced within the cells and which are toxic to biological systems. The protein is Superoxide dismutase [Fe] (sodB) of Pseudomonas putida (Arthrobacter siderocapsulatus).